Consider the following 328-residue polypeptide: Lytic polysaccharide monooxygenase aasB (328 aa).

Residues 1–18 (MKAFFAISASTLLATVHG) form the signal peptide. Position 19 (His19) interacts with Cu(2+). The cysteines at positions 40 and 43 are disulfide-linked. A glycan (N-linked (GlcNAc...) asparagine) is linked at Asn54. Disulfide bonds link Cys66/Cys245, Cys102/Cys203, Cys118/Cys145, Cys153/Cys161, Cys167/Cys173, and Cys181/Cys192. His109 provides a ligand contact to Cu(2+). Tyr242 contacts Cu(2+). Residue Asn306 is glycosylated (N-linked (GlcNAc...) asparagine).

Belongs to the polysaccharide monooxygenase AA13 family. Cu(2+) serves as cofactor.

Its subcellular location is the secreted. The catalysed reaction is starch + reduced acceptor + O2 = D-glucono-1,5-lactone-terminated malto-oligosaccharides + short-chain malto-oligosaccharides + acceptor + H2O.. Its function is as follows. Lytic polysaccharide monooxygenase involved in breakdown of granular resistant starch. This Emericella nidulans (strain FGSC A4 / ATCC 38163 / CBS 112.46 / NRRL 194 / M139) (Aspergillus nidulans) protein is Lytic polysaccharide monooxygenase aasB.